Here is a 605-residue protein sequence, read N- to C-terminus: Acetoin dehydrogenase operon transcriptional activator AcoR (605 aa).

The Sigma-54 factor interaction domain maps to Val-295 to Ile-520. ATP is bound by residues Gly-323–Glu-330 and Ala-387–Glu-396. The segment at residues Val-578 to Lys-597 is a DNA-binding region (H-T-H motif).

In terms of biological role, acts as a transcriptional activator of the acoABCL operon encoding the acetoin dehydrogenase complex. In Bacillus subtilis (strain 168), this protein is Acetoin dehydrogenase operon transcriptional activator AcoR (acoR).